Reading from the N-terminus, the 659-residue chain is Nicastrin (659 aa).

Positions 1 to 22 (MKIKNYFIIVFIIIVLSTDVIS) are cleaved as a signal peptide. Residues 23-627 (SQSSIEDKMY…LFQVGSYANE (605 aa)) are Extracellular-facing. N-linked (GlcNAc...) asparagine glycosylation is found at Asn94, Asn172, Asn305, Asn389, Asn451, Asn475, Asn550, Asn553, and Asn600. Residues 628-648 (IWFLVSGLIELLLSVGIIFYI) form a helical membrane-spanning segment. Residues 649–659 (KKYLSKRYKLL) are Cytoplasmic-facing.

It belongs to the nicastrin family. As to quaternary structure, homodimer. Component of the gamma-secretase complex, a complex composed of a presenilin homodimer, nicastrin, aph1 and pen2.

It localises to the membrane. Its function is as follows. Essential subunit of the gamma-secretase complex, an endoprotease complex that catalyzes the intramembrane cleavage of integral membrane proteins such as Notch receptors and APP (amyloid-beta precursor protein). It probably represents a stabilizing cofactor required for the assembly of the gamma-secretase complex. The chain is Nicastrin (ncstn) from Dictyostelium discoideum (Social amoeba).